The sequence spans 86 residues: Small ribosomal subunit protein bS20 (86 aa).

The protein belongs to the bacterial ribosomal protein bS20 family.

In terms of biological role, binds directly to 16S ribosomal RNA. This is Small ribosomal subunit protein bS20 from Sulfurimonas denitrificans (strain ATCC 33889 / DSM 1251) (Thiomicrospira denitrificans (strain ATCC 33889 / DSM 1251)).